The sequence spans 321 residues: Olfactory receptor 52P1 (321 aa).

Residues methionine 1–leucine 27 are Extracellular-facing. Asparagine 5 carries N-linked (GlcNAc...) asparagine glycosylation. Residues tryptophan 28–leucine 48 form a helical membrane-spanning segment. The Cytoplasmic portion of the chain corresponds to valine 49–valine 56. A helical membrane pass occupies residues leucine 57–valine 77. The Extracellular portion of the chain corresponds to serine 78–alanine 101. Cysteine 99 and cysteine 191 form a disulfide bridge. The chain crosses the membrane as a helical span at residues glutamine 102 to phenylalanine 122. Over aspartate 123–threonine 141 the chain is Cytoplasmic. The chain crosses the membrane as a helical span at residues isoleucine 142–proline 162. Residues phenylalanine 163 to arginine 198 lie on the Extracellular side of the membrane. A helical transmembrane segment spans residues valine 199–serine 219. The Cytoplasmic portion of the chain corresponds to tyrosine 220–alanine 239. The helical transmembrane segment at leucine 240 to serine 260 threads the bilayer. Over phenylalanine 261–histidine 275 the chain is Extracellular. The helical transmembrane segment at isoleucine 276–valine 296 threads the bilayer. At lysine 297–methionine 315 the chain is on the cytoplasmic side.

The protein belongs to the G-protein coupled receptor 1 family.

The protein resides in the cell membrane. Functionally, odorant receptor. The polypeptide is Olfactory receptor 52P1 (Homo sapiens (Human)).